The primary structure comprises 753 residues: Photosystem I P700 chlorophyll a apoprotein A1 (753 aa).

8 consecutive transmembrane segments (helical) span residues 72–95 (IFSAHFGHLAIIFVWLSGAYFHGA), 158–181 (LYCTAIGGLVMAALMMFAGWFHYH), 197–221 (MNHHLAGLLGLGCLSWAGHQIHVSL), 293–311 (TAHHHLALAVLFIVAGHMY), 350–373 (WHAQLAINLAMLGSLSIIVAHHMY), 389–415 (LSLFTHHMWIGGFLIVGAGAHGAIFMV), 437–459 (AIISHLNWVCIFLGFHSFGLYVH), and 534–552 (FMVHHIHAFTIHVTALILL). The [4Fe-4S] cluster site is built by C576 and C585. 2 helical membrane passes run 592–613 (HVFLGLFWMYNSLSIVIFHFSW) and 667–689 (LSAYGLLFLGAHFIWAFSLMFLF). H678 serves as a coordination point for chlorophyll a'. Residues M686 and Y694 each contribute to the chlorophyll a site. W695 contacts phylloquinone. Residues 727 to 747 (AVGVAHYLLGGIVTTWAFFLA) traverse the membrane as a helical segment.

It belongs to the PsaA/PsaB family. As to quaternary structure, the PsaA/B heterodimer binds the P700 chlorophyll special pair and subsequent electron acceptors. PSI consists of a core antenna complex that captures photons, and an electron transfer chain that converts photonic excitation into a charge separation. The cyanobacterial PSI reaction center is composed of one copy each of PsaA,B,C,D,E,F,I,J,K,L,M and X, and forms trimeric complexes. PSI electron transfer chain: 5 chlorophyll a, 1 chlorophyll a', 2 phylloquinones and 3 4Fe-4S clusters. PSI core antenna: 90 chlorophyll a, 22 carotenoids, 3 phospholipids and 1 galactolipid. P700 is a chlorophyll a/chlorophyll a' dimer, A0 is one or more chlorophyll a, A1 is one or both phylloquinones and FX is a shared 4Fe-4S iron-sulfur center. is required as a cofactor.

Its subcellular location is the cellular thylakoid membrane. It carries out the reaction reduced [plastocyanin] + hnu + oxidized [2Fe-2S]-[ferredoxin] = oxidized [plastocyanin] + reduced [2Fe-2S]-[ferredoxin]. PsaA and PsaB bind P700, the primary electron donor of photosystem I (PSI), as well as the electron acceptors A0, A1 and FX. PSI is a plastocyanin/cytochrome c6-ferredoxin oxidoreductase, converting photonic excitation into a charge separation, which transfers an electron from the donor P700 chlorophyll pair to the spectroscopically characterized acceptors A0, A1, FX, FA and FB in turn. Oxidized P700 is reduced on the lumenal side of the thylakoid membrane by plastocyanin or cytochrome c6. This is Photosystem I P700 chlorophyll a apoprotein A1 from Trichodesmium erythraeum (strain IMS101).